The following is a 156-amino-acid chain: Protein-export protein SecB (156 aa).

Belongs to the SecB family. In terms of assembly, homotetramer, a dimer of dimers. One homotetramer interacts with 1 SecA dimer.

The protein localises to the cytoplasm. Functionally, one of the proteins required for the normal export of preproteins out of the cell cytoplasm. It is a molecular chaperone that binds to a subset of precursor proteins, maintaining them in a translocation-competent state. It also specifically binds to its receptor SecA. This is Protein-export protein SecB from Yersinia enterocolitica serotype O:8 / biotype 1B (strain NCTC 13174 / 8081).